Consider the following 99-residue polypeptide: Large ribosomal subunit protein uL23 (99 aa).

The protein belongs to the universal ribosomal protein uL23 family. Part of the 50S ribosomal subunit. Contacts protein L29, and trigger factor when it is bound to the ribosome.

One of the early assembly proteins it binds 23S rRNA. One of the proteins that surrounds the polypeptide exit tunnel on the outside of the ribosome. Forms the main docking site for trigger factor binding to the ribosome. This chain is Large ribosomal subunit protein uL23, found in Ectopseudomonas mendocina (strain ymp) (Pseudomonas mendocina).